Consider the following 307-residue polypeptide: Thymidylate synthase (307 aa).

The interval methionine 1–histidine 22 is disordered. A compositionally biased stretch (polar residues) spans glutamate 7–arginine 16. Arginine 44 contacts dUMP. Serine 108 carries the post-translational modification Phosphoserine. DUMP contacts are provided by residues arginine 169–arginine 170, cysteine 189–histidine 190, arginine 209–aspartate 212, asparagine 220, and histidine 250–tyrosine 252. Cysteine 189 (nucleophile) is an active-site residue. Aspartate 212 provides a ligand contact to (6R)-5,10-methylene-5,6,7,8-tetrahydrofolate. Glycyl lysine isopeptide (Lys-Gly) (interchain with G-Cter in SUMO2) cross-links involve residues lysine 286 and lysine 302. Residue alanine 306 participates in (6R)-5,10-methylene-5,6,7,8-tetrahydrofolate binding.

Belongs to the thymidylate synthase family. As to quaternary structure, homodimer.

Its subcellular location is the nucleus. The protein resides in the cytoplasm. It localises to the mitochondrion. It is found in the mitochondrion matrix. The protein localises to the mitochondrion inner membrane. The catalysed reaction is dUMP + (6R)-5,10-methylene-5,6,7,8-tetrahydrofolate = 7,8-dihydrofolate + dTMP. It functions in the pathway pyrimidine metabolism; dTTP biosynthesis. In terms of biological role, catalyzes the reductive methylation of 2'-deoxyuridine 5'-monophosphate (dUMP) to thymidine 5'-monophosphate (dTMP), using the cosubstrate, 5,10- methylenetetrahydrofolate (CH2H4folate) as a 1-carbon donor and reductant and contributes to the de novo mitochondrial thymidylate biosynthesis pathway. The protein is Thymidylate synthase (Tyms) of Rattus norvegicus (Rat).